Here is a 241-residue protein sequence, read N- to C-terminus: Small ribosomal subunit protein uS5 (241 aa).

Positions 1–53 (MSDNEKETQVAEETQNTQAAAESNNEDRKSRRGQRGEGRRGERRNRREESHEN) are disordered. The span at 11–22 (AEETQNTQAAAE) shows a compositional bias: low complexity. The segment covering 25 to 53 (NEDRKSRRGQRGEGRRGERRNRREESHEN) has biased composition (basic and acidic residues). The S5 DRBM domain maps to 55–118 (MLDRVVTINR…LDAKKHMFTV (64 aa)).

The protein belongs to the universal ribosomal protein uS5 family. Part of the 30S ribosomal subunit. Contacts proteins S4 and S8.

With S4 and S12 plays an important role in translational accuracy. In terms of biological role, located at the back of the 30S subunit body where it stabilizes the conformation of the head with respect to the body. The sequence is that of Small ribosomal subunit protein uS5 from Bifidobacterium adolescentis (strain ATCC 15703 / DSM 20083 / NCTC 11814 / E194a).